Reading from the N-terminus, the 828-residue chain is Periplasmic nitrate reductase (828 aa).

Positions 1 to 31 (MKLSRRSFMKANAVAAAAAAAGLSVPGVARA) form a signal peptide, tat-type signal. The region spanning 39–95 (IKWDKAPCRFCGTGCGVLVGTQQGRVVACQGDPDAPVNRGLNCIKGYFLPKIMYGKD) is the 4Fe-4S Mo/W bis-MGD-type domain. Positions 46, 49, 53, and 81 each coordinate [4Fe-4S] cluster. Residues Lys-83, Gln-150, Asn-175, Cys-179, 212–219 (WGANMAEM), 243–247 (STYQH), 262–264 (QSD), Met-372, Gln-376, Asn-482, 508–509 (SD), Lys-531, Asp-558, and 718–727 (TGRVLEHWHT) contribute to the Mo-bis(molybdopterin guanine dinucleotide) site. Residue Phe-794 participates in substrate binding. Positions 802 and 819 each coordinate Mo-bis(molybdopterin guanine dinucleotide).

The protein belongs to the prokaryotic molybdopterin-containing oxidoreductase family. NasA/NapA/NarB subfamily. Component of the periplasmic nitrate reductase NapAB complex composed of NapA and NapB. It depends on [4Fe-4S] cluster as a cofactor. Mo-bis(molybdopterin guanine dinucleotide) serves as cofactor. In terms of processing, predicted to be exported by the Tat system. The position of the signal peptide cleavage has not been experimentally proven.

It localises to the periplasm. It carries out the reaction 2 Fe(II)-[cytochrome] + nitrate + 2 H(+) = 2 Fe(III)-[cytochrome] + nitrite + H2O. In terms of biological role, catalytic subunit of the periplasmic nitrate reductase complex NapAB. Receives electrons from NapB and catalyzes the reduction of nitrate to nitrite. This chain is Periplasmic nitrate reductase, found in Shigella boydii serotype 18 (strain CDC 3083-94 / BS512).